Reading from the N-terminus, the 718-residue chain is uncharacterized protein (718 aa).

6 consecutive transmembrane segments (helical) span residues 9-29 (VISTIPVFIAVNIAAVGIWFF), 60-80 (NVFFTLIAFSISSFIVQLHIG), 83-103 (IQYIVLMTVLTFIFTMIGAVG), 136-156 (VMILCGTLLYSVVTLIVYLFF), 391-411 (IVVFLCCAIVEFFQFNLGYWI), and 506-526 (LLDTLLGAAISWFAVSYLWPD).

This sequence belongs to the YccS/YhfK family.

It is found in the cell membrane. This is an uncharacterized protein from Haemophilus influenzae (strain ATCC 51907 / DSM 11121 / KW20 / Rd).